The sequence spans 452 residues: tRNA-2-methylthio-N(6)-dimethylallyladenosine synthase (452 aa).

One can recognise an MTTase N-terminal domain in the interval 3-118 (KKVFIKTYGC…LPQLLAERER (116 aa)). Cys12, Cys49, Cys81, Cys155, Cys159, and Cys162 together coordinate [4Fe-4S] cluster. Positions 141–379 (RVEGASAFVS…QTVINDSIKR (239 aa)) constitute a Radical SAM core domain. The TRAM domain maps to 382–445 (ESRLGTVQRI…SFTLRGEVVT (64 aa)).

It belongs to the methylthiotransferase family. MiaB subfamily. In terms of assembly, monomer. The cofactor is [4Fe-4S] cluster.

It is found in the cytoplasm. It catalyses the reaction N(6)-dimethylallyladenosine(37) in tRNA + (sulfur carrier)-SH + AH2 + 2 S-adenosyl-L-methionine = 2-methylsulfanyl-N(6)-dimethylallyladenosine(37) in tRNA + (sulfur carrier)-H + 5'-deoxyadenosine + L-methionine + A + S-adenosyl-L-homocysteine + 2 H(+). Its function is as follows. Catalyzes the methylthiolation of N6-(dimethylallyl)adenosine (i(6)A), leading to the formation of 2-methylthio-N6-(dimethylallyl)adenosine (ms(2)i(6)A) at position 37 in tRNAs that read codons beginning with uridine. In Albidiferax ferrireducens (strain ATCC BAA-621 / DSM 15236 / T118) (Rhodoferax ferrireducens), this protein is tRNA-2-methylthio-N(6)-dimethylallyladenosine synthase.